The chain runs to 275 residues: Large ribosomal subunit protein uL2cz (275 aa).

Disordered regions lie at residues 1–22 (MAIHLYKTSTPSTRNGAVDSQV) and 226–275 (NPVD…RRRK).

The protein belongs to the universal ribosomal protein uL2 family. In terms of assembly, part of the 50S ribosomal subunit.

Its subcellular location is the plastid. The protein resides in the chloroplast. The chain is Large ribosomal subunit protein uL2cz (rpl2-A) from Chloranthus spicatus (Chulantree).